A 160-amino-acid polypeptide reads, in one-letter code: UPF0260 protein GDI1595/Gdia_1801 (160 aa).

Belongs to the UPF0260 family.

The polypeptide is UPF0260 protein GDI1595/Gdia_1801 (Gluconacetobacter diazotrophicus (strain ATCC 49037 / DSM 5601 / CCUG 37298 / CIP 103539 / LMG 7603 / PAl5)).